The primary structure comprises 484 residues: tRNA sulfurtransferase (484 aa).

Residues 63-167 (KEMGERLTCM…DKRLFVIHSQ (105 aa)) enclose the THUMP domain. ATP contacts are provided by residues 185 to 186 (LM), Lys-267, Gly-289, and Gln-298. A disulfide bridge links Cys-346 with Cys-457. The region spanning 405 to 483 (ALAGQIVIDI…GHANVRVYRP (79 aa)) is the Rhodanese domain. The active-site Cysteine persulfide intermediate is the Cys-457.

The protein belongs to the ThiI family.

The protein localises to the cytoplasm. It catalyses the reaction [ThiI sulfur-carrier protein]-S-sulfanyl-L-cysteine + a uridine in tRNA + 2 reduced [2Fe-2S]-[ferredoxin] + ATP + H(+) = [ThiI sulfur-carrier protein]-L-cysteine + a 4-thiouridine in tRNA + 2 oxidized [2Fe-2S]-[ferredoxin] + AMP + diphosphate. It carries out the reaction [ThiS sulfur-carrier protein]-C-terminal Gly-Gly-AMP + S-sulfanyl-L-cysteinyl-[cysteine desulfurase] + AH2 = [ThiS sulfur-carrier protein]-C-terminal-Gly-aminoethanethioate + L-cysteinyl-[cysteine desulfurase] + A + AMP + 2 H(+). The protein operates within cofactor biosynthesis; thiamine diphosphate biosynthesis. Functionally, catalyzes the ATP-dependent transfer of a sulfur to tRNA to produce 4-thiouridine in position 8 of tRNAs, which functions as a near-UV photosensor. Also catalyzes the transfer of sulfur to the sulfur carrier protein ThiS, forming ThiS-thiocarboxylate. This is a step in the synthesis of thiazole, in the thiamine biosynthesis pathway. The sulfur is donated as persulfide by IscS. This Pseudomonas fluorescens (strain Pf0-1) protein is tRNA sulfurtransferase.